Here is a 291-residue protein sequence, read N- to C-terminus: Fructose-1,6-bisphosphatase class 1 1 (291 aa).

Mg(2+) contacts are provided by E78, D95, L97, and D98. Substrate is bound by residues 98–101 (DGSS), Y203, and K233. E239 provides a ligand contact to Mg(2+).

It belongs to the FBPase class 1 family. Homotetramer. It depends on Mg(2+) as a cofactor.

It is found in the cytoplasm. The catalysed reaction is beta-D-fructose 1,6-bisphosphate + H2O = beta-D-fructose 6-phosphate + phosphate. Its pathway is carbohydrate biosynthesis; gluconeogenesis. The chain is Fructose-1,6-bisphosphatase class 1 1 from Haloarcula marismortui (strain ATCC 43049 / DSM 3752 / JCM 8966 / VKM B-1809) (Halobacterium marismortui).